A 368-amino-acid chain; its full sequence is Chorismate synthase (368 aa).

Arg46 contributes to the NADP(+) binding site. FMN contacts are provided by residues 124–126 (RAS), Gly284, 299–303 (KPTPS), and Arg326.

Belongs to the chorismate synthase family. The cofactor is FMNH2.

It catalyses the reaction 5-O-(1-carboxyvinyl)-3-phosphoshikimate = chorismate + phosphate. The protein operates within metabolic intermediate biosynthesis; chorismate biosynthesis; chorismate from D-erythrose 4-phosphate and phosphoenolpyruvate: step 7/7. In terms of biological role, catalyzes the anti-1,4-elimination of the C-3 phosphate and the C-6 proR hydrogen from 5-enolpyruvylshikimate-3-phosphate (EPSP) to yield chorismate, which is the branch point compound that serves as the starting substrate for the three terminal pathways of aromatic amino acid biosynthesis. This reaction introduces a second double bond into the aromatic ring system. The chain is Chorismate synthase from Pyrobaculum arsenaticum (strain DSM 13514 / JCM 11321 / PZ6).